The primary structure comprises 181 residues: Acireductone dioxygenase (181 aa).

Positions 97, 99, 103, and 141 each coordinate Fe(2+). The Ni(2+) site is built by H97, H99, E103, and H141.

Belongs to the acireductone dioxygenase (ARD) family. Monomer. The cofactor is Fe(2+). It depends on Ni(2+) as a cofactor.

It catalyses the reaction 1,2-dihydroxy-5-(methylsulfanyl)pent-1-en-3-one + O2 = 3-(methylsulfanyl)propanoate + CO + formate + 2 H(+). The catalysed reaction is 1,2-dihydroxy-5-(methylsulfanyl)pent-1-en-3-one + O2 = 4-methylsulfanyl-2-oxobutanoate + formate + 2 H(+). It participates in amino-acid biosynthesis; L-methionine biosynthesis via salvage pathway; L-methionine from S-methyl-5-thio-alpha-D-ribose 1-phosphate: step 5/6. Its function is as follows. Catalyzes 2 different reactions between oxygen and the acireductone 1,2-dihydroxy-3-keto-5-methylthiopentene (DHK-MTPene) depending upon the metal bound in the active site. Fe-containing acireductone dioxygenase (Fe-ARD) produces formate and 2-keto-4-methylthiobutyrate (KMTB), the alpha-ketoacid precursor of methionine in the methionine recycle pathway. Ni-containing acireductone dioxygenase (Ni-ARD) produces methylthiopropionate, carbon monoxide and formate, and does not lie on the methionine recycle pathway. The protein is Acireductone dioxygenase of Pseudomonas fluorescens (strain ATCC BAA-477 / NRRL B-23932 / Pf-5).